The primary structure comprises 389 residues: MSNLKNFLFTSESVSEGHPDKVSDRISDMVVDSFLSGDPFSRVACETLTTTNKVVLAGEVRGPSIKEEDLIQKVRECIKDIGYDQDGFTWREATKIESHLHAQSADIAMGVDSSSNKDEGAGDQGIMFGYACNETEELMPAPIHYSHKILRLMAEDRKSGKLKNIEPDSKSQVTFEYVDGKPTKVKSVVISSQHSADVDQAKVRELLKPYLLKSIPEKFLKDFNEEELYINPTGNFVIGGPDGDCGLTGRKIIVDTYGGAAPHGGGAFSGKDPTKVDRSAAYAARYIAKNIVASNIAEKCLIQLAYAIGVSKPLSIYVDLFDNDLEKNKFVTEKISENFDLSPRGIREMLGLNKPIYEKTAAYGHFGRVPEANGSFSWEKTDKKDVFSK.

Histidine 18 contacts ATP. Aspartate 20 serves as a coordination point for Mg(2+). Residue glutamate 46 coordinates K(+). L-methionine is bound by residues glutamate 59 and glutamine 103. A flexible loop region spans residues 103–113 (QSADIAMGVDS). ATP is bound by residues 168 to 170 (DSK), aspartate 244, 250 to 251 (RK), alanine 267, and lysine 271. Residue aspartate 244 participates in L-methionine binding. Lysine 275 is a binding site for L-methionine.

This sequence belongs to the AdoMet synthase family. As to quaternary structure, homotetramer; dimer of dimers. The cofactor is Mg(2+). K(+) serves as cofactor.

It localises to the cytoplasm. It catalyses the reaction L-methionine + ATP + H2O = S-adenosyl-L-methionine + phosphate + diphosphate. Its pathway is amino-acid biosynthesis; S-adenosyl-L-methionine biosynthesis; S-adenosyl-L-methionine from L-methionine: step 1/1. Catalyzes the formation of S-adenosylmethionine (AdoMet) from methionine and ATP. The overall synthetic reaction is composed of two sequential steps, AdoMet formation and the subsequent tripolyphosphate hydrolysis which occurs prior to release of AdoMet from the enzyme. The protein is S-adenosylmethionine synthase of Pelagibacter ubique (strain HTCC1062).